The following is a 252-amino-acid chain: MFKKLFRQDENILNSELAEDLPIPRHVAIIMDGNGRWAKKRFLPRIAGHKEGMDVVKRVTRYANAIGIDVLTLYAFSTENWKRPTDEVDFLMKLPVEFFDSFVPELIEENVRVNVMGYRENLPDHTMRAVEKAIADTAHCTGLTLNFALNYGGRSEIITAAKEAMKELELEGKSADDLTEEKLNDHLMSSGLGDPDLLIRTSGELRLSNFMLWQLAYSEFYFTDTHWPDFSKEDFLQAIIEYQNRSRRFGGL.

The active site involves Asp32. Position 32 (Asp32) interacts with Mg(2+). Substrate-binding positions include 33–36 (GNGR), Trp37, Arg45, His49, and 77–79 (STE). The active-site Proton acceptor is Asn80. Substrate-binding positions include Trp81, Arg83, Arg200, and 206 to 208 (RLS). Glu219 contacts Mg(2+).

This sequence belongs to the UPP synthase family. In terms of assembly, homodimer. It depends on Mg(2+) as a cofactor.

In terms of biological role, catalyzes the condensation of isopentenyl diphosphate (IPP) with allylic pyrophosphates generating different type of terpenoids. In Listeria monocytogenes serovar 1/2a (strain ATCC BAA-679 / EGD-e), this protein is Isoprenyl transferase.